Consider the following 400-residue polypeptide: Enoyl-[acyl-carrier-protein] reductase [NADH] (400 aa).

NAD(+) is bound by residues 48–53, 74–75, 111–112, and 139–140; these read GSSSGY, FE, DA, and LA. Tyr-225 provides a ligand contact to substrate. The Proton donor role is filled by Tyr-235. Residues Lys-244 and 273 to 275 each bind NAD(+); that span reads VVT.

It belongs to the TER reductase family. As to quaternary structure, monomer.

The catalysed reaction is a 2,3-saturated acyl-[ACP] + NAD(+) = a (2E)-enoyl-[ACP] + NADH + H(+). It participates in lipid metabolism; fatty acid biosynthesis. Its function is as follows. Involved in the final reduction of the elongation cycle of fatty acid synthesis (FAS II). Catalyzes the reduction of a carbon-carbon double bond in an enoyl moiety that is covalently linked to an acyl carrier protein (ACP). This is Enoyl-[acyl-carrier-protein] reductase [NADH] from Shewanella baltica (strain OS185).